Reading from the N-terminus, the 271-residue chain is Phosphatidylglycerol--prolipoprotein diacylglyceryl transferase (271 aa).

Transmembrane regions (helical) follow at residues 25-45, 60-80, 103-123, 134-154, 181-201, 209-229, and 235-255; these read WYGI…KFFV, YFIW…ILIY, FVGI…IATL, WIFL…GRIG, PSQF…VYLA, GELI…CEFY, and GIGF…IMFI. Arginine 152 provides a ligand contact to a 1,2-diacyl-sn-glycero-3-phospho-(1'-sn-glycerol).

The protein belongs to the Lgt family.

The protein localises to the cell inner membrane. The enzyme catalyses L-cysteinyl-[prolipoprotein] + a 1,2-diacyl-sn-glycero-3-phospho-(1'-sn-glycerol) = an S-1,2-diacyl-sn-glyceryl-L-cysteinyl-[prolipoprotein] + sn-glycerol 1-phosphate + H(+). It functions in the pathway protein modification; lipoprotein biosynthesis (diacylglyceryl transfer). Its function is as follows. Catalyzes the transfer of the diacylglyceryl group from phosphatidylglycerol to the sulfhydryl group of the N-terminal cysteine of a prolipoprotein, the first step in the formation of mature lipoproteins. This Campylobacter jejuni subsp. doylei (strain ATCC BAA-1458 / RM4099 / 269.97) protein is Phosphatidylglycerol--prolipoprotein diacylglyceryl transferase.